Reading from the N-terminus, the 249-residue chain is Adenylate kinase (249 aa).

43 to 48 lines the ATP pocket; it reads GAGKGT. Positions 63–92 are NMP; that stretch reads ATGDMLRAQVAAKTALGVEAKKIMDQGGLV. AMP-binding positions include Thr-64, Arg-69, 90–92, 119–122, and Gln-126; these read GLV and GFPR. The tract at residues 160–197 is LID; sequence GRLVHPASGRSYHKLFNPPKKDMTDDVTGEPLVQRSDD. ATP-binding positions include Arg-161 and 170–171; that span reads SY. Residues 177–197 form a disordered region; that stretch reads PPKKDMTDDVTGEPLVQRSDD. AMP-binding residues include Arg-194 and Arg-205. Gln-233 contacts ATP.

Belongs to the adenylate kinase family. AK2 subfamily. In terms of assembly, monomer.

It is found in the cytoplasm. Its subcellular location is the cytosol. The protein resides in the mitochondrion intermembrane space. The catalysed reaction is AMP + ATP = 2 ADP. Functionally, catalyzes the reversible transfer of the terminal phosphate group between ATP and AMP. Plays an important role in cellular energy homeostasis and in adenine nucleotide metabolism. Adenylate kinase activity is critical for regulation of the phosphate utilization and the AMP de novo biosynthesis pathways. The sequence is that of Adenylate kinase from Candida albicans (strain SC5314 / ATCC MYA-2876) (Yeast).